Consider the following 158-residue polypeptide: Protein E6 (158 aa).

Zinc fingers lie at residues 32 to 68 and 105 to 141; these read CVYC…CHKC and CLRC…CNTC. The PDZ-binding domain signature appears at 156-158; the sequence is TQV.

The protein belongs to the papillomaviridae E6 protein family. Forms homodimers. Interacts with ubiquitin-protein ligase UBE3A/E6-AP and thus forms a complex with human TP53. Interacts with human NFX1 and MAGI3. Interacts with human IRF3; this interaction inhibits the establishment of antiviral state. Interacts with human TYK2; this interaction inhibits JAK-STAT activation by interferon alpha. Interacts with host DLG1; this interaction leads to the proteasomal degradation of DLG1.

It is found in the host cytoplasm. It localises to the host nucleus. Its function is as follows. This protein has transforming activity in vitro. Functionally, plays a major role in the induction and maintenance of cellular transformation. Acts mainly as an oncoprotein by stimulating the destruction of many host cell key regulatory proteins. E6 associates with host UBE3A/E6-AP ubiquitin-protein ligase, and inactivates tumor suppressors TP53 and TP73 by targeting them to the 26S proteasome for degradation. In turn, DNA damage and chromosomal instabilities increase and lead to cell proliferation and cancer development. The complex E6/E6AP targets several other substrates to degradation via the proteasome including host DLG1 or NFX1, a repressor of human telomerase reverse transcriptase (hTERT). The resulting increased expression of hTERT prevents the shortening of telomere length leading to cell immortalization. Other cellular targets including BAK1, Fas-associated death domain-containing protein (FADD) and procaspase 8, are degraded by E6/E6AP causing inhibition of apoptosis. E6 also inhibits immune response by interacting with host IRF3 and TYK2. These interactions prevent IRF3 transcriptional activities and inhibit TYK2-mediated JAK-STAT activation by interferon alpha resulting in inhibition of the interferon signaling pathway. This is Protein E6 from Homo sapiens (Human).